Here is a 376-residue protein sequence, read N- to C-terminus: Protein RecA (376 aa).

66–73 (GPESSGKT) contacts ATP. The tract at residues 329–376 (VGVKPEDLTAEPGADAAGAAADAEAPAKSVPAPAAKSAKGSKAAAAKS) is disordered. The segment covering 338–376 (AEPGADAAGAAADAEAPAKSVPAPAAKSAKGSKAAAAKS) has biased composition (low complexity).

The protein belongs to the RecA family.

It is found in the cytoplasm. Can catalyze the hydrolysis of ATP in the presence of single-stranded DNA, the ATP-dependent uptake of single-stranded DNA by duplex DNA, and the ATP-dependent hybridization of homologous single-stranded DNAs. It interacts with LexA causing its activation and leading to its autocatalytic cleavage. The protein is Protein RecA of Streptomyces rimosus.